A 98-amino-acid polypeptide reads, in one-letter code: Capsid assembly scaffolding protein (98 aa).

Residues 40–62 (VSEYNDLTKSHEKLAAEKDDLIV) adopt a coiled-coil conformation.

It belongs to the phi29likevirus scaffolding protein family. As to quaternary structure, homodimer. Interacts non-specifically with DNA; probably binds DNA in the early stages of DNA packaging.

Functionally, scaffolding protein involved in the icosahedric procapsid assembly. Coassembles with the capsid proteins to form the procapsid. The scaffolding protein is found within the capsid as a serie of concentric shells. During DNA packaging, the scaffolding protein molecules are released from the procapsid. The polypeptide is Capsid assembly scaffolding protein (7) (Bacillus subtilis (Bacteriophage phi-29)).